The primary structure comprises 256 residues: 5-oxoprolinase subunit A (256 aa).

The protein belongs to the LamB/PxpA family. As to quaternary structure, forms a complex composed of PxpA, PxpB and PxpC.

The enzyme catalyses 5-oxo-L-proline + ATP + 2 H2O = L-glutamate + ADP + phosphate + H(+). In terms of biological role, catalyzes the cleavage of 5-oxoproline to form L-glutamate coupled to the hydrolysis of ATP to ADP and inorganic phosphate. In Azoarcus sp. (strain BH72), this protein is 5-oxoprolinase subunit A.